A 313-amino-acid chain; its full sequence is Carbamate kinase 2 (313 aa).

The protein belongs to the carbamate kinase family.

Its subcellular location is the cytoplasm. It catalyses the reaction hydrogencarbonate + NH4(+) + ATP = carbamoyl phosphate + ADP + H2O + H(+). It functions in the pathway metabolic intermediate metabolism; carbamoyl phosphate degradation; CO(2) and NH(3) from carbamoyl phosphate: step 1/1. The polypeptide is Carbamate kinase 2 (arcC2) (Staphylococcus aureus (strain Mu50 / ATCC 700699)).